Reading from the N-terminus, the 370-residue chain is Pyrimidine monooxygenase RutA (370 aa).

Residues 49–50 (IK), Asn-115, Glu-124, 140–141 (RY), and Ser-190 each bind FMN.

The protein belongs to the NtaA/SnaA/DszA monooxygenase family. RutA subfamily.

It catalyses the reaction uracil + FMNH2 + NADH + O2 = (Z)-3-ureidoacrylate + FMN + NAD(+) + H2O + H(+). It carries out the reaction thymine + FMNH2 + NADH + O2 = (Z)-2-methylureidoacrylate + FMN + NAD(+) + H2O + H(+). Catalyzes the pyrimidine ring opening between N-3 and C-4 by an unusual flavin hydroperoxide-catalyzed mechanism, adding oxygen atoms in the process to yield ureidoacrylate peracid, that immediately reacts with FMN forming ureidoacrylate and FMN-N(5)-oxide. The FMN-N(5)-oxide reacts spontaneously with NADH to produce FMN. Requires the flavin reductase RutF to regenerate FMN in vivo. This Variovorax paradoxus (strain S110) protein is Pyrimidine monooxygenase RutA.